The primary structure comprises 1034 residues: Ice nucleation protein InaU (1034 aa).

The tract at residues 162-993 (ATYGSTLSGT…LTAGENSVLI (832 aa)) is octapeptide periodicity. Disordered stretches follow at residues 260–287 (YGST…KGSD), 311–342 (TQTA…GYGS), 356–383 (YGST…KGSD), 407–438 (TQTA…GYGS), 452–480 (YGST…GSDL), and 570–597 (AREG…TGYG). Composition is skewed to polar residues over residues 261-286 (GSTQ…QKGS), 311-334 (TQTA…QKGS), 357-382 (GSTQ…QKGS), 407-430 (TQTA…QKGS), 453-480 (GSTQ…GSDL), and 580-592 (YGST…NSDL).

The protein belongs to the bacterial ice nucleation protein family.

It localises to the cell outer membrane. Functionally, ice nucleation proteins enable bacteria to nucleate crystallization in supercooled water. The sequence is that of Ice nucleation protein InaU (inaU) from Pantoea ananas (Erwinia uredovora).